We begin with the raw amino-acid sequence, 466 residues long: Cysteine--tRNA ligase (466 aa).

Residue Cys28 coordinates Zn(2+). The 'HIGH' region motif lies at 30–40 (PTVYNYIHIGN). Cys208, His233, and Glu237 together coordinate Zn(2+). The short motif at 265 to 269 (KMSKS) is the 'KMSKS' region element. Lys268 serves as a coordination point for ATP.

The protein belongs to the class-I aminoacyl-tRNA synthetase family. As to quaternary structure, monomer. It depends on Zn(2+) as a cofactor.

The protein localises to the cytoplasm. The enzyme catalyses tRNA(Cys) + L-cysteine + ATP = L-cysteinyl-tRNA(Cys) + AMP + diphosphate. The sequence is that of Cysteine--tRNA ligase from Staphylococcus haemolyticus (strain JCSC1435).